The primary structure comprises 239 residues: Ribonuclease HII (239 aa).

Residues 18–231 (KIIVGLDEAG…SKNLLKEIEE (214 aa)) form the RNase H type-2 domain. 3 residues coordinate a divalent metal cation: aspartate 24, glutamate 25, and aspartate 125.

Belongs to the RNase HII family. Mn(2+) serves as cofactor. Requires Mg(2+) as cofactor.

Its subcellular location is the cytoplasm. It carries out the reaction Endonucleolytic cleavage to 5'-phosphomonoester.. In terms of biological role, endonuclease that specifically degrades the RNA of RNA-DNA hybrids. This chain is Ribonuclease HII, found in Methanococcus maripaludis (strain C7 / ATCC BAA-1331).